Here is a 490-residue protein sequence, read N- to C-terminus: Pre-glycoprotein polyprotein GP complex (490 aa).

Residue Gly-2 is the site of N-myristoyl glycine; by host attachment. Residues 2–17 (GQIVTFFQEVPHVIEE) lie on the Extracellular side of the membrane. Residues 18–33 (VMNIVLIALSILAILK) traverse the membrane as a helical segment. At 34–58 (GLYNVATCGLIGLVTFLLLSGRSCS) the chain is on the cytoplasmic side. Cys-57 is a Zn(2+) binding site. Topologically, residues 59 to 431 (LIYKGTYELQ…QGKTPLGLVD (373 aa)) are extracellular. N-linked (GlcNAc...) asparagine; by host glycans are attached at residues Asn-78, Asn-88, Asn-98, Asn-108, Asn-118, and Asn-166. 6 disulfides stabilise this stretch: Cys-85/Cys-230, Cys-117/Cys-154, Cys-179/Cys-211, Cys-278/Cys-291, Cys-300/Cys-309, and Cys-363/Cys-384. Asn-223 carries N-linked (GlcNAc...) asparagine; by host glycosylation. Residues Asn-364, Asn-372, Asn-389, and Asn-394 are each glycosylated (N-linked (GlcNAc...) asparagine; by host). A helical membrane pass occupies residues 432–452 (LFVFSTSFYLISIFLHLVKIP). Over 453-490 (THRHIVGKPCPKPHRLNHMGICSCGLYKQPGVPVRWKR) the chain is Cytoplasmic. Residues His-454, His-456, Cys-462, His-466, Cys-474, and Cys-476 each contribute to the Zn(2+) site.

This sequence belongs to the arenaviridae GPC protein family. As to quaternary structure, interacts with glycoprotein G2. Part of the GP complex (GP-C) together with glycoprotein G1 and glycoprotein G2. The GP-complex interacts with protein Z, which interacts with ribonucleocapsid; these interactions may induce virion budding. Homotrimer; disulfide-linked. In pre-fusion state, G1 homotrimers bind G2 homotrimers via ionic interactions. Part of the GP complex (GP-C) together with glycoprotein G2 and the stable signal peptide. Interacts with the primary host receptor DAG1 on the cell surface; this interaction occurs at pH 8.0 but not at pH 6.0 and below. Upon virus internalization and at endosomal pH, interacts with the host lysosomal protein LAMP1; this interaction mediates G1 dissociation from GP-C and membrane fusion. The GP-complex interacts with protein Z, which interacts with ribonucleocapsid; these interactions may induce virion budding. In terms of assembly, homotrimer. Interacts with the stable signal peptide. In pre-fusion state, G2 homotrimers bind G1 homotrimers via ionic interactions. Part of the GP complex (GP-C) together with glycoprotein G1 and the stable signal peptide. Acidification in the endosome triggers rearrangements, which ultimately leads to a 6 helix bundle formed by the two heptad repeat domains (HR1 and HR2) in post-fusion state. The GP-complex interacts with protein Z, which interacts with ribonucleocapsid; these interactions may induce virion budding. Specific enzymatic cleavages in vivo yield mature proteins. GP-C polyprotein is cleaved in the endoplasmic reticulum by the host protease MBTPS1. Only cleaved glycoprotein is incorporated into virions. Post-translationally, the SSP remains stably associated with the GP complex following cleavage by signal peptidase and plays crucial roles in the trafficking of GP through the secretory pathway. In terms of processing, myristoylation is necessary for GP2-mediated fusion activity.

The protein localises to the virion membrane. The protein resides in the host endoplasmic reticulum membrane. It is found in the host Golgi apparatus membrane. It localises to the host cell membrane. Functions as a cleaved signal peptide that is retained as the third component of the GP complex (GP-C). Helps to stabilize the spike complex in its native conformation. The SSP is required for efficient glycoprotein expression, post-translational maturation cleavage of G1 and G2, glycoprotein transport to the cell surface plasma membrane, formation of infectious virus particles, and acid pH-dependent glycoprotein-mediated cell fusion. Functionally, forms the virion spikes together with glycoprotein G2. The glycoprotein spike trimers are connected to the underlying matrix. Interacts with the host receptor. Mediates virus attachment to the host primary receptor alpha-dystroglycan DAG1 (alpha-DG) at the cell surface. This attachment induces virion internalization apparently through macropinocytosis. Following endocytosis, there is a pH-dependent switch from binding DAG1 to the host lysosomal receptor LAMP1. This latter binding triggers the dissociation of GP1, exposing the fusion subunit, GP2, such that fusion can occur. Down-modulates host DAG1. Its function is as follows. Forms the virion spikes together with glycoprotein G1. The glycoprotein spike trimers are connected to the underlying matrix. Class I viral fusion protein that directs fusion of viral and host endosomal membranes, leading to delivery of the nucleocapsid into the cytoplasm. Membrane fusion is mediated by irreversible conformational changes induced by acidification. The polypeptide is Pre-glycoprotein polyprotein GP complex (Lassa virus (strain GA391) (LASV)).